The following is a 275-amino-acid chain: Rhamnulose-1-phosphate aldolase (275 aa).

Glutamate 117 is a catalytic residue. 3 residues coordinate Zn(2+): histidine 141, histidine 143, and histidine 212.

The protein belongs to the aldolase class II family. RhaD subfamily. As to quaternary structure, homotetramer. The cofactor is Zn(2+).

The protein localises to the cytoplasm. The enzyme catalyses L-rhamnulose 1-phosphate = (S)-lactaldehyde + dihydroxyacetone phosphate. The protein operates within carbohydrate degradation; L-rhamnose degradation; glycerone phosphate from L-rhamnose: step 3/3. Catalyzes the reversible cleavage of L-rhamnulose-1-phosphate to dihydroxyacetone phosphate (DHAP) and L-lactaldehyde. This Salmonella dublin (strain CT_02021853) protein is Rhamnulose-1-phosphate aldolase.